A 562-amino-acid chain; its full sequence is Arginine--tRNA ligase (562 aa).

Residues 122–132 (PNIAKDMHVGH) carry the 'HIGH' region motif.

The protein belongs to the class-I aminoacyl-tRNA synthetase family. Monomer.

Its subcellular location is the cytoplasm. The enzyme catalyses tRNA(Arg) + L-arginine + ATP = L-arginyl-tRNA(Arg) + AMP + diphosphate. This chain is Arginine--tRNA ligase, found in Chlamydia felis (strain Fe/C-56) (Chlamydophila felis).